Here is a 320-residue protein sequence, read N- to C-terminus: MPEKVAVLLGGTSSERQISLQSGHAVVAGLREAGIDARPIDTKNFLVTELKEKGFTKAFIALHGRDGEDGHLQAVLEFLKIPYTGSGVMASALAMDKHRSKMIFQGAGLPVSPYVALNREQIWPNVTQNTSNDLLLNNRISNKLIKNINQLGLPLIVKPSREGSSFGMTKVEHLDQLDDALKKAWHYDEEILVEKWHFGTELTVAILGDTVLPSIRIQVSDIFYDYQAKYVSDKTQYFCPSGLKQEQEKQLATLSMNAYRALGCDGWGRVDVMLDDEGHFYLMEINTAPGMTDHSLFPMAARQAGFSFSELVCKILSLAH.

Residues 101-317 (KMIFQGAGLP…FSELVCKILS (217 aa)) form the ATP-grasp domain. 148–203 (INQLGLPLIVKPSREGSSFGMTKVEHLDQLDDALKKAWHYDEEILVEKWHFGTELT) is a binding site for ATP. Positions 271, 284, and 286 each coordinate Mg(2+).

It belongs to the D-alanine--D-alanine ligase family. It depends on Mg(2+) as a cofactor. The cofactor is Mn(2+).

Its subcellular location is the cytoplasm. The enzyme catalyses 2 D-alanine + ATP = D-alanyl-D-alanine + ADP + phosphate + H(+). Its pathway is cell wall biogenesis; peptidoglycan biosynthesis. In terms of biological role, cell wall formation. The sequence is that of D-alanine--D-alanine ligase from Hamiltonella defensa subsp. Acyrthosiphon pisum (strain 5AT).